The following is a 304-amino-acid chain: MIHTLTLNTAIDMNMFCDPLKPSAVNRTRHTEYCPNGKGVNVSLILNHYQQPTHIIGIFGGFTGRYIVEELRQKKIKVTPAWVSEPPRINIFINDGAEEYKLVNPGAKIDDECKQQVIHHLQCVASGDYLAISGSLPPGIESRFYAEIIELCQQKRCEVILDISHPVLRQLLELRPLLIKPNDDELAGNLGLDVSNHQQVREAMRTLHQLGARNVLLTMGAELPYFSDGEGVWFCSARKIALVSSACAGDAALGAFLSKWLNKEDVAHALALASATGADVAGSAGLGKLQRTEELLQQIQVVQL.

Asp-250 (proton acceptor) is an active-site residue.

This sequence belongs to the carbohydrate kinase PfkB family. It depends on Mg(2+) as a cofactor.

It catalyses the reaction alpha-D-tagatopyranose 1-phosphate + ATP = D-tagatofuranose 1,6-bisphosphate + ADP + H(+). Its pathway is carbohydrate degradation. In terms of biological role, kinase involved in a D-tagatose catabolic pathway. Catalyzes the phosphorylation of D-tagatose-1-phosphate (Tag-1P) to D-tagatose-1,6-bisphosphate. The protein is D-tagatose-1-phosphate kinase of Klebsiella oxytoca.